A 232-amino-acid chain; its full sequence is Adenosylcobinamide-GDP ribazoletransferase (232 aa).

A run of 7 helical transmembrane segments spans residues 24–44, 46–66, 96–116, 117–137, 153–173, 174–194, and 210–230; these read LWAF…ILYL, IPLA…LLHL, IAGV…LSML, PFYA…LGLA, GMNG…YLPV, VIYD…WYVI, and GAMA…SLCF.

This sequence belongs to the CobS family. The cofactor is Mg(2+).

It localises to the cell membrane. The catalysed reaction is alpha-ribazole + adenosylcob(III)inamide-GDP = adenosylcob(III)alamin + GMP + H(+). It catalyses the reaction alpha-ribazole 5'-phosphate + adenosylcob(III)inamide-GDP = adenosylcob(III)alamin 5'-phosphate + GMP + H(+). It participates in cofactor biosynthesis; adenosylcobalamin biosynthesis; adenosylcobalamin from cob(II)yrinate a,c-diamide: step 7/7. Its function is as follows. Joins adenosylcobinamide-GDP and alpha-ribazole to generate adenosylcobalamin (Ado-cobalamin). Also synthesizes adenosylcobalamin 5'-phosphate from adenosylcobinamide-GDP and alpha-ribazole 5'-phosphate. The chain is Adenosylcobinamide-GDP ribazoletransferase from Pyrococcus abyssi (strain GE5 / Orsay).